The chain runs to 103 residues: MSHEPEYRDWQQIVELIRSSVDSQQHEMLLTMLMTPDERESLTARVNILNELLKGELSQRQISQMLGVGIATITRGSNELKSKSEAEKDKLKLLLEQVAQVAK.

Residues 59–82 (QRQISQMLGVGIATITRGSNELKS) mediate DNA binding.

The protein belongs to the TrpR family. In terms of assembly, homodimer.

It is found in the cytoplasm. Its function is as follows. This protein is an aporepressor. When complexed with L-tryptophan it binds the operator region of the trp operon and prevents the initiation of transcription. This is Trp operon repressor homolog from Vibrio parahaemolyticus serotype O3:K6 (strain RIMD 2210633).